The following is a 341-amino-acid chain: Type II methyltransferase M.NgoPII (341 aa).

The region spanning 12–341 is the SAM-dependent MTase C5-type domain; that stretch reads MKIISLFSGC…AAAIKKTLER (330 aa). C84 is an active-site residue.

This sequence belongs to the class I-like SAM-binding methyltransferase superfamily. C5-methyltransferase family.

The enzyme catalyses a 2'-deoxycytidine in DNA + S-adenosyl-L-methionine = a 5-methyl-2'-deoxycytidine in DNA + S-adenosyl-L-homocysteine + H(+). In terms of biological role, a methylase that recognizes the double-stranded sequence 5'-GGCC-3', methylates C-3 on both strands, and protects the DNA from cleavage by the NgoPII endonuclease. The protein is Type II methyltransferase M.NgoPII (ngoPIIM) of Neisseria gonorrhoeae.